We begin with the raw amino-acid sequence, 142 residues long: Large-conductance mechanosensitive channel (142 aa).

3 helical membrane passes run Phe10–Gly30, Leu40–Val60, and Gly86–Val106.

Belongs to the MscL family. Homopentamer.

The protein localises to the cell inner membrane. Its function is as follows. Channel that opens in response to stretch forces in the membrane lipid bilayer. May participate in the regulation of osmotic pressure changes within the cell. The protein is Large-conductance mechanosensitive channel of Delftia acidovorans (strain DSM 14801 / SPH-1).